A 364-amino-acid polypeptide reads, in one-letter code: Probable UDP-arabinopyranose mutase 4 (364 aa).

The DXD motif signature appears at 106-108; it reads DDD. Arg-154 is a glycosylation site (N-linked (Glc...) arginine).

The protein belongs to the RGP family. In terms of assembly, heteromers with RGP1 and RGP2. It depends on Mn(2+) as a cofactor. Mg(2+) is required as a cofactor. Post-translationally, reversibly glycosylated in vitro by UDP-glucose, UDP-xylose and UDP-galactose, but not UDP-mannose. As to expression, specifically expressed in developing seeds.

It localises to the cytoplasm. It is found in the cytosol. Its subcellular location is the golgi apparatus. It catalyses the reaction UDP-beta-L-arabinofuranose = UDP-beta-L-arabinopyranose. Probable UDP-L-arabinose mutase involved in the biosynthesis of cell wall non-cellulosic polysaccharides. The polypeptide is Probable UDP-arabinopyranose mutase 4 (Arabidopsis thaliana (Mouse-ear cress)).